Here is a 558-residue protein sequence, read N- to C-terminus: Glutamine--tRNA ligase (558 aa).

The short motif at P36–H46 is the 'HIGH' region element. ATP-binding positions include E37 to N39 and H43 to S49. L-glutamine contacts are provided by D69 and Y214. ATP-binding positions include T233, R263–L264, and L271–K273. The 'KMSKS' region signature appears at L270 to R274.

It belongs to the class-I aminoacyl-tRNA synthetase family. Monomer.

Its subcellular location is the cytoplasm. The catalysed reaction is tRNA(Gln) + L-glutamine + ATP = L-glutaminyl-tRNA(Gln) + AMP + diphosphate. The sequence is that of Glutamine--tRNA ligase from Nitrobacter hamburgensis (strain DSM 10229 / NCIMB 13809 / X14).